The primary structure comprises 438 residues: Trigger factor (438 aa).

The PPIase FKBP-type domain occupies 162–247; that stretch reads GDIVTIDFEG…VKEIKVKELP (86 aa).

It belongs to the FKBP-type PPIase family. Tig subfamily.

The protein localises to the cytoplasm. It catalyses the reaction [protein]-peptidylproline (omega=180) = [protein]-peptidylproline (omega=0). Functionally, involved in protein export. Acts as a chaperone by maintaining the newly synthesized protein in an open conformation. Functions as a peptidyl-prolyl cis-trans isomerase. The protein is Trigger factor of Caldicellulosiruptor saccharolyticus (strain ATCC 43494 / DSM 8903 / Tp8T 6331).